The chain runs to 1309 residues: Putative receptor-type tyrosine-protein phosphatase mosPTP-1 (1309 aa).

The signal sequence occupies residues 1 to 36; it reads MNSAPRNAGAARSVDRRGFIAACGLLVLLVVRMLGA. The Extracellular portion of the chain corresponds to 37–572; the sequence is ADATRIFDIE…RQVYDDYNLA (536 aa). N-linked (GlcNAc...) asparagine glycans are attached at residues asparagine 60, asparagine 107, asparagine 162, asparagine 257, asparagine 353, asparagine 389, asparagine 455, asparagine 501, and asparagine 513. 4 Fibronectin type-III domains span residues 147 to 244, 249 to 347, 350 to 449, and 450 to 553; these read PPGR…TLRE, KPVT…DEGV, KPLN…SGPS, and APKV…LQLH. A helical membrane pass occupies residues 573 to 593; the sequence is VLGGIVFSCFGLLLIVLSFLL. The Cytoplasmic portion of the chain corresponds to 594–1309; the sequence is WKKCFHAAYY…NHLNLDHNQS (716 aa). 2 Tyrosine-protein phosphatase domains span residues 656 to 921 and 944 to 1196; these read FSKE…LVEA and IDNQ…LSYM. The active-site Phosphocysteine intermediate is cysteine 862. The disordered stretch occupies residues 1239 to 1269; it reads NSGDGGGNGNDGVPTGNGTNGGLPMSGGGTT. The segment covering 1256–1268 has biased composition (gly residues); the sequence is GTNGGLPMSGGGT.

It belongs to the protein-tyrosine phosphatase family. Receptor class subfamily. Interacts with C-type lectin mosGCTL-1; the interaction probably mediates the recruitment of West Nile virus particles in complex with C-type lectin mosGCTL-1 to the cell surface. Interacts with C-type lectin mosGCTL-7; the interaction probably mediates the recruitment of Japanese encephalitis virus particles in complex with C-type lectin mosGCTL-7 to the cell surface. In terms of tissue distribution, salivary gland (at protein level). Hemolymph. Low-level expression in midgut.

The protein localises to the cell membrane. The enzyme catalyses O-phospho-L-tyrosyl-[protein] + H2O = L-tyrosyl-[protein] + phosphate. Functionally, putative protein tyrosine-protein phosphatase. Its function is as follows. (Microbial infection) Facilitates West Nile virus infection in mosquitoes probably via recruiting West Nile virus particles in complex with C-type lectin mosGCTL-1 to the cell surface. (Microbial infection) Facilitates Japanese encephalitis virus infection in mosquitoes probably via recruiting Japanese encephalitis virus particles in complex with C-type lectin mosGCTL-7 to the cell surface. The sequence is that of Putative receptor-type tyrosine-protein phosphatase mosPTP-1 from Aedes aegypti (Yellowfever mosquito).